We begin with the raw amino-acid sequence, 587 residues long: DELLA protein RGA (587 aa).

The interval 1–26 is disordered; the sequence is MKRDHHQFQGRLSNHGTSSSSSSISK. Residues 44 to 48 carry the DELLA motif motif; that stretch reads DELLA. The LEXLE motif motif lies at 66–70; sequence LEQLE. Positions 89–93 match the VHYNP motif motif; that stretch reads VHYNP. A disordered region spans residues 152–181; the sequence is IDSSSSSNNQNKRLKSCSSPDSMVTSTSTG. Over residues 153–175 the composition is skewed to polar residues; it reads DSSSSSNNQNKRLKSCSSPDSMV. In terms of domain architecture, GRAS spans 212–581; it reads VDSQENGVRL…RPLITTSAWK (370 aa). Residues 219-273 form a leucine repeat I (LRI) region; the sequence is VRLVHALMACAEAIQQNNLTLAEALVKQIGCLAVSQAGAMRKVATYFAEALARRI. The segment at 292–357 is VHIID; the sequence is QMHFYETCPY…GGPPTFRLTG (66 aa). Residues 323–327 carry the VHIID motif; the sequence is VHVID. The leucine repeat II (LRII) stretch occupies residues 371–403; the sequence is EVGCKLAQLAEAIHVEFEYRGFVANSLADLDAS. A PFYRE region spans residues 415 to 502; the sequence is VAVNSVFELH…EVYLGKQICN (88 aa). Positions 423 to 427 match the LXXLL motif motif; it reads LHKLL. The segment at 505–581 is SAW; the sequence is ACEGPDRVER…RPLITTSAWK (77 aa).

It belongs to the GRAS family. DELLA subfamily. In terms of assembly, interacts directly with the GID2/SLY1 component of the SCF(GID2) complex. Interacts (via N-terminus) with GID1A, GID1B and GID1B (via N-terminus). Binds to bHLH transcription factors such as MYC2, PIF1, PIF4, PIF6 and SPT. Interacts with the BOI proteins BOI, BRG1, BRG2 and BRG3. Interacts with NFYC9. Interacts with TOPP4. Interacts with FLZ5. Binds to zinc finger proteins MGP/IDD3, IDD4, IDD5, BIB/IDD9 and JKD/IDD10 in the nucleus. Binds to and coactivates GAF1/IDD2 and ENY/IDD1. Binds to PDF2 and ATML1. In terms of processing, phosphorylated. Phosphorylation may increase the interaction with GID2. Gibberellin (GA) induces dephosphorylation of RGA by TOPP4 and subsequent degradation by the proteasomal pathway. Post-translationally, ubiquitinated. Upon GA application it is ubiquitinated by the SCF(GID2) complex, leading to its subsequent degradation. In terms of processing, O-fucosylated by SPY. O-fucosylation enhances RGA activity by promoting RGA binding to key transcription factors in brassinosteroid and light signaling pathways. In terms of tissue distribution, ubiquitously expressed. Expressed in roots, rosette leaves, bolting and mature stems, young and mature siliques, flower buds and influorescences.

The protein resides in the nucleus. Its function is as follows. Probable transcriptional regulator that acts as a repressor of the gibberellin (GA) signaling pathway. Probably acts by participating in large multiprotein complexes that repress transcription of GA-inducible genes. Positively regulates XERICO expression in seeds. Upon GA application, it is degraded by the proteasome, allowing the GA signaling pathway. Compared to other DELLA proteins, it is the most sensitive to GA application. No effect of the BOI proteins on its stability. Its activity is probably regulated by other phytohormones such as auxin and ethylene, attenuation of auxin transport delaying its GA-induced degradation. Involved in the regulation of seed dormancy and germination, including glucose-induced delay of seed germination. The sequence is that of DELLA protein RGA from Arabidopsis thaliana (Mouse-ear cress).